A 338-amino-acid chain; its full sequence is Ketol-acid reductoisomerase (NADP(+)) (338 aa).

In terms of domain architecture, KARI N-terminal Rossmann spans methionine 1–threonine 181. Residues tyrosine 24–glutamine 27, arginine 47, and serine 52 each bind NADP(+). Residue histidine 107 is part of the active site. Residue glycine 133 coordinates NADP(+). Positions asparagine 182–isoleucine 327 constitute a KARI C-terminal knotted domain. Mg(2+)-binding residues include aspartate 190, glutamate 194, glutamate 226, and glutamate 230. Serine 251 serves as a coordination point for substrate.

It belongs to the ketol-acid reductoisomerase family. Mg(2+) is required as a cofactor.

It carries out the reaction (2R)-2,3-dihydroxy-3-methylbutanoate + NADP(+) = (2S)-2-acetolactate + NADPH + H(+). The enzyme catalyses (2R,3R)-2,3-dihydroxy-3-methylpentanoate + NADP(+) = (S)-2-ethyl-2-hydroxy-3-oxobutanoate + NADPH + H(+). Its pathway is amino-acid biosynthesis; L-isoleucine biosynthesis; L-isoleucine from 2-oxobutanoate: step 2/4. It functions in the pathway amino-acid biosynthesis; L-valine biosynthesis; L-valine from pyruvate: step 2/4. Functionally, involved in the biosynthesis of branched-chain amino acids (BCAA). Catalyzes an alkyl-migration followed by a ketol-acid reduction of (S)-2-acetolactate (S2AL) to yield (R)-2,3-dihydroxy-isovalerate. In the isomerase reaction, S2AL is rearranged via a Mg-dependent methyl migration to produce 3-hydroxy-3-methyl-2-ketobutyrate (HMKB). In the reductase reaction, this 2-ketoacid undergoes a metal-dependent reduction by NADPH to yield (R)-2,3-dihydroxy-isovalerate. In Polaromonas sp. (strain JS666 / ATCC BAA-500), this protein is Ketol-acid reductoisomerase (NADP(+)).